The following is a 120-amino-acid chain: NAD(P)H-quinone oxidoreductase subunit 3, chloroplastic (120 aa).

3 consecutive transmembrane segments (helical) span residues 9-29 (IFWA…LISG), 64-84 (MFAL…PWAM), and 88-108 (VLGV…IVGL).

Belongs to the complex I subunit 3 family. In terms of assembly, NDH is composed of at least 16 different subunits, 5 of which are encoded in the nucleus.

It localises to the plastid. The protein localises to the chloroplast thylakoid membrane. The catalysed reaction is a plastoquinone + NADH + (n+1) H(+)(in) = a plastoquinol + NAD(+) + n H(+)(out). It carries out the reaction a plastoquinone + NADPH + (n+1) H(+)(in) = a plastoquinol + NADP(+) + n H(+)(out). NDH shuttles electrons from NAD(P)H:plastoquinone, via FMN and iron-sulfur (Fe-S) centers, to quinones in the photosynthetic chain and possibly in a chloroplast respiratory chain. The immediate electron acceptor for the enzyme in this species is believed to be plastoquinone. Couples the redox reaction to proton translocation, and thus conserves the redox energy in a proton gradient. The protein is NAD(P)H-quinone oxidoreductase subunit 3, chloroplastic of Ceratophyllum demersum (Rigid hornwort).